The chain runs to 520 residues: Bifunctional purine biosynthesis protein PurH (520 aa).

The region spanning 1 to 150 is the MGS-like domain; the sequence is MSDDRKAIKR…KNHPSVAVVV (150 aa).

This sequence belongs to the PurH family.

The catalysed reaction is (6R)-10-formyltetrahydrofolate + 5-amino-1-(5-phospho-beta-D-ribosyl)imidazole-4-carboxamide = 5-formamido-1-(5-phospho-D-ribosyl)imidazole-4-carboxamide + (6S)-5,6,7,8-tetrahydrofolate. It carries out the reaction IMP + H2O = 5-formamido-1-(5-phospho-D-ribosyl)imidazole-4-carboxamide. Its pathway is purine metabolism; IMP biosynthesis via de novo pathway; 5-formamido-1-(5-phospho-D-ribosyl)imidazole-4-carboxamide from 5-amino-1-(5-phospho-D-ribosyl)imidazole-4-carboxamide (10-formyl THF route): step 1/1. It participates in purine metabolism; IMP biosynthesis via de novo pathway; IMP from 5-formamido-1-(5-phospho-D-ribosyl)imidazole-4-carboxamide: step 1/1. The protein is Bifunctional purine biosynthesis protein PurH of Corynebacterium glutamicum (strain R).